We begin with the raw amino-acid sequence, 209 residues long: Protein-L-isoaspartate O-methyltransferase (209 aa).

Ser-55 is a catalytic residue.

The protein belongs to the methyltransferase superfamily. L-isoaspartyl/D-aspartyl protein methyltransferase family.

It localises to the cytoplasm. The catalysed reaction is [protein]-L-isoaspartate + S-adenosyl-L-methionine = [protein]-L-isoaspartate alpha-methyl ester + S-adenosyl-L-homocysteine. Its function is as follows. Catalyzes the methyl esterification of L-isoaspartyl residues in peptides and proteins that result from spontaneous decomposition of normal L-aspartyl and L-asparaginyl residues. It plays a role in the repair and/or degradation of damaged proteins. The polypeptide is Protein-L-isoaspartate O-methyltransferase (Anaeromyxobacter dehalogenans (strain 2CP-1 / ATCC BAA-258)).